Here is a 741-residue protein sequence, read N- to C-terminus: Phosphoribosylformylglycinamidine synthase subunit PurL (741 aa).

His-54 is a catalytic residue. ATP-binding residues include Tyr-57 and Lys-98. Glu-100 provides a ligand contact to Mg(2+). Residues 101–104 (SHNH) and Arg-123 contribute to the substrate site. His-102 functions as the Proton acceptor in the catalytic mechanism. Asp-124 serves as a coordination point for Mg(2+). Residue Gln-251 participates in substrate binding. Residue Asp-279 participates in Mg(2+) binding. A substrate-binding site is contributed by 323–325 (ESQ). The ATP site is built by Asp-510 and Gly-547. Residue Asn-548 participates in Mg(2+) binding. Ser-550 lines the substrate pocket.

This sequence belongs to the FGAMS family. Monomer. Part of the FGAM synthase complex composed of 1 PurL, 1 PurQ and 2 PurS subunits.

It localises to the cytoplasm. The enzyme catalyses N(2)-formyl-N(1)-(5-phospho-beta-D-ribosyl)glycinamide + L-glutamine + ATP + H2O = 2-formamido-N(1)-(5-O-phospho-beta-D-ribosyl)acetamidine + L-glutamate + ADP + phosphate + H(+). Its pathway is purine metabolism; IMP biosynthesis via de novo pathway; 5-amino-1-(5-phospho-D-ribosyl)imidazole from N(2)-formyl-N(1)-(5-phospho-D-ribosyl)glycinamide: step 1/2. Functionally, part of the phosphoribosylformylglycinamidine synthase complex involved in the purines biosynthetic pathway. Catalyzes the ATP-dependent conversion of formylglycinamide ribonucleotide (FGAR) and glutamine to yield formylglycinamidine ribonucleotide (FGAM) and glutamate. The FGAM synthase complex is composed of three subunits. PurQ produces an ammonia molecule by converting glutamine to glutamate. PurL transfers the ammonia molecule to FGAR to form FGAM in an ATP-dependent manner. PurS interacts with PurQ and PurL and is thought to assist in the transfer of the ammonia molecule from PurQ to PurL. This chain is Phosphoribosylformylglycinamidine synthase subunit PurL, found in Picrophilus torridus (strain ATCC 700027 / DSM 9790 / JCM 10055 / NBRC 100828 / KAW 2/3).